The sequence spans 336 residues: Probable tRNA N6-adenosine threonylcarbamoyltransferase (336 aa).

Residues H110, H114, and Y131 each contribute to the a divalent metal cation site. Residues 131 to 135, D163, G178, E182, and N267 each bind substrate; that span reads YVSGG. D295 is an a divalent metal cation binding site.

This sequence belongs to the KAE1 / TsaD family. In terms of assembly, component of the EKC/KEOPS complex; the whole complex dimerizes. Requires a divalent metal cation as cofactor.

It is found in the cytoplasm. The protein localises to the nucleus. It catalyses the reaction L-threonylcarbamoyladenylate + adenosine(37) in tRNA = N(6)-L-threonylcarbamoyladenosine(37) in tRNA + AMP + H(+). Its function is as follows. Component of the EKC/KEOPS complex that is required for the formation of a threonylcarbamoyl group on adenosine at position 37 (t(6)A37) in tRNAs that read codons beginning with adenine. The complex is probably involved in the transfer of the threonylcarbamoyl moiety of threonylcarbamoyl-AMP (TC-AMP) to the N6 group of A37. Osgep likely plays a direct catalytic role in this reaction, but requires other protein(s) of the complex to fulfill this activity. This is Probable tRNA N6-adenosine threonylcarbamoyltransferase from Dictyostelium discoideum (Social amoeba).